The following is a 392-amino-acid chain: Pannexin-3 (392 aa).

Residues 1–39 (MSLAHTAAEYMLSDALLPDRRGPRLKGLRLELPLDRIVK) lie on the Cytoplasmic side of the membrane. Residues 40–60 (FVAVGSPLLLMSLAFAQEFSS) traverse the membrane as a helical segment. Over 61-113 (GSPISCFSPSNFSIRQAAYVDSSCWDSLLHHKQDGPGQDKMKSLWPHKALPYS) the chain is Extracellular. Residue Asn-71 is glycosylated (N-linked (GlcNAc...) asparagine). A helical transmembrane segment spans residues 114-134 (LLALALLMYLPVLLWQYAAVP). Topologically, residues 135 to 215 (ALSSDLLFII…VATYLLRNSL (81 aa)) are cytoplasmic. A helical membrane pass occupies residues 216-236 (LLIFTSATYLYLGHFHLDVFF). At 237-267 (QEEFSCSIKTGLLSDETHVPNLITCRLTSLS) the chain is on the extracellular side. Residues 268–288 (IFQIVSLSSVAIYTILVPVII) form a helical membrane-spanning segment. The Cytoplasmic segment spans residues 289–392 (YNLTRLCRWD…LTNSACDEHP (104 aa)).

Belongs to the pannexin family. Homoheptameric.

Its subcellular location is the cell membrane. It is found in the cell junction. The protein resides in the gap junction. It localises to the endoplasmic reticulum membrane. The catalysed reaction is Ca(2+)(in) = Ca(2+)(out). It catalyses the reaction ATP(in) = ATP(out). Its function is as follows. Regulator of osteoblast differentiation by functionning as a Ca(2+) channel in the endoplasmic reticulum which regulates calmodulin (CaM) pathways. Allows ATP release into the extracellular space and activation or purinergic receptors. The polypeptide is Pannexin-3 (Homo sapiens (Human)).